A 135-amino-acid polypeptide reads, in one-letter code: Translation initiation factor 2 subunit beta (135 aa).

Belongs to the eIF-2-beta/eIF-5 family. As to quaternary structure, heterotrimer composed of an alpha, a beta and a gamma chain.

EIF-2 functions in the early steps of protein synthesis by forming a ternary complex with GTP and initiator tRNA. This chain is Translation initiation factor 2 subunit beta, found in Methanobrevibacter smithii (strain ATCC 35061 / DSM 861 / OCM 144 / PS).